Here is a 217-residue protein sequence, read N- to C-terminus: MTENNEFDVADLRREYIRGGLRRSDLTENPLELFERWLKQACEARLPDPTAMCVATVDTNGQPYQRIVLLKHYDDQGLVFYTNLGSRKAQQLAENPHISLLFPWHMLDRQVIFLGKAERLSTLEVLKYFHSRPKDSQIGAWVSQQSSRISARGVLESKFLELKQKFQQGDVPLPSFWGGFRVKFDSVEFWQGGEHRLHDRFIYQREADAWKIDRLAP.

Residues 13–16 (RREY) and Lys71 each bind substrate. Residues 66–71 (RIVLLK), 81–82 (YT), Arg87, Lys88, and Gln110 contribute to the FMN site. Substrate contacts are provided by Tyr128, Arg132, and Ser136. FMN-binding positions include 145-146 (QS) and Trp190. 196 to 198 (RLH) lines the substrate pocket. Position 200 (Arg200) interacts with FMN.

This sequence belongs to the pyridoxamine 5'-phosphate oxidase family. As to quaternary structure, homodimer. FMN serves as cofactor.

It carries out the reaction pyridoxamine 5'-phosphate + O2 + H2O = pyridoxal 5'-phosphate + H2O2 + NH4(+). The enzyme catalyses pyridoxine 5'-phosphate + O2 = pyridoxal 5'-phosphate + H2O2. The protein operates within cofactor metabolism; pyridoxal 5'-phosphate salvage; pyridoxal 5'-phosphate from pyridoxamine 5'-phosphate: step 1/1. It functions in the pathway cofactor metabolism; pyridoxal 5'-phosphate salvage; pyridoxal 5'-phosphate from pyridoxine 5'-phosphate: step 1/1. Functionally, catalyzes the oxidation of either pyridoxine 5'-phosphate (PNP) or pyridoxamine 5'-phosphate (PMP) into pyridoxal 5'-phosphate (PLP). The polypeptide is Pyridoxine/pyridoxamine 5'-phosphate oxidase (Yersinia pestis bv. Antiqua (strain Antiqua)).